The chain runs to 1175 residues: uncharacterized protein (1175 aa).

Position 586–593 (586–593) interacts with ATP; sequence GPAGTGKT.

This is an uncharacterized protein from Methanocaldococcus jannaschii (strain ATCC 43067 / DSM 2661 / JAL-1 / JCM 10045 / NBRC 100440) (Methanococcus jannaschii).